The primary structure comprises 1038 residues: Bone morphogenetic protein receptor type-2 (1038 aa).

Residues 1–26 form the signal peptide; sequence MTSSLQRPWRVPWLPWTILLVSTAAA. Over 27–150 the chain is Extracellular; the sequence is SQNQERLCAF…PPHSFNRDET (124 aa). 5 disulfide bridges follow: cysteine 34–cysteine 66, cysteine 60–cysteine 84, cysteine 94–cysteine 117, cysteine 99–cysteine 116, and cysteine 118–cysteine 123. Asparagine 55 is a glycosylation site (N-linked (GlcNAc...) asparagine). Residue asparagine 110 is glycosylated (N-linked (GlcNAc...) asparagine). Asparagine 126 carries an N-linked (GlcNAc...) asparagine glycan. Residues 151–171 form a helical membrane-spanning segment; sequence IIIALASVSVLAVLIVALCFG. At 172-1038 the chain is on the cytoplasmic side; it reads YRMLTGDRKQ…VSKDIGMNCL (867 aa). The 302-residue stretch at 203-504 folds into the Protein kinase domain; sequence LKLLELIGRG…QCAEERMAEL (302 aa). ATP contacts are provided by residues 209–217, lysine 230, and 280–282; these read IGRGRYGAV and EYY. Aspartate 333 serves as the catalytic Proton acceptor. Residues 337–338 and aspartate 351 contribute to the ATP site; that span reads RN. Threonine 379 carries the post-translational modification Phosphothreonine. The residue at position 586 (serine 586) is a Phosphoserine. Residues 593-626 are disordered; sequence QAQARIPSPETSVTSLSTNTTTTNTTGLTPSTGM. Low complexity predominate over residues 603 to 626; sequence TSVTSLSTNTTTTNTTGLTPSTGM. 2 positions are modified to phosphoserine: serine 680 and serine 681. 2 disordered regions span residues 746–770 and 872–972; these read PKQQ…KEPR and RREQ…EKIK. A compositionally biased stretch (basic and acidic residues) spans 872 to 896; it reads RREQQAGHDEGVLDRLVDRRERPLE. A compositionally biased stretch (polar residues) spans 937-964; the sequence is RPNSLDLSATNVLDGSSIQIGESTQDGK.

This sequence belongs to the protein kinase superfamily. TKL Ser/Thr protein kinase family. TGFB receptor subfamily. As to quaternary structure, interacts with GDF5. Interacts with BMP4. Interacts with SCUBE3. Interacts with TSC22D1/TSC-22. Interacts with activin A/INHBA. Requires Mg(2+) as cofactor. It depends on Mn(2+) as a cofactor. Highly expressed in heart and liver.

The protein localises to the cell membrane. The catalysed reaction is L-threonyl-[receptor-protein] + ATP = O-phospho-L-threonyl-[receptor-protein] + ADP + H(+). The enzyme catalyses L-seryl-[receptor-protein] + ATP = O-phospho-L-seryl-[receptor-protein] + ADP + H(+). In terms of biological role, on ligand binding, forms a receptor complex consisting of two type II and two type I transmembrane serine/threonine kinases. Type II receptors phosphorylate and activate type I receptors which autophosphorylate, then bind and activate SMAD transcriptional regulators. Can also mediate signaling through the activation of the p38MAPK cascade. Binds to BMP7, BMP2 and, less efficiently, BMP4. Binding is weak but enhanced by the presence of type I receptors for BMPs. Mediates induction of adipogenesis by GDF6. Promotes signaling also by binding to activin A/INHBA. The chain is Bone morphogenetic protein receptor type-2 (BMPR2) from Homo sapiens (Human).